A 582-amino-acid polypeptide reads, in one-letter code: ATP-dependent lipid A-core flippase (582 aa).

The next 5 membrane-spanning stretches (helical) occupy residues 16-36 (LWPT…ALIL), 64-84 (LLWM…TSYI), 153-173 (IIGL…ILVV), 253-273 (PIIQ…ASFP), and 275-295 (VMDS…IALM). The region spanning 28-310 (IVAGIALILN…LTNVNAQFQR (283 aa)) is the ABC transmembrane type-1 domain. The 237-residue stretch at 342–578 (LEFRNVTFTY…HGVYAQLHKM (237 aa)) folds into the ABC transporter domain. 376–383 (GRSGSGKS) contacts ATP.

This sequence belongs to the ABC transporter superfamily. Lipid exporter (TC 3.A.1.106) family. In terms of assembly, homodimer.

It localises to the cell inner membrane. The enzyme catalyses ATP + H2O + lipid A-core oligosaccharideSide 1 = ADP + phosphate + lipid A-core oligosaccharideSide 2.. Involved in lipopolysaccharide (LPS) biosynthesis. Translocates lipid A-core from the inner to the outer leaflet of the inner membrane. Transmembrane domains (TMD) form a pore in the inner membrane and the ATP-binding domain (NBD) is responsible for energy generation. In Salmonella choleraesuis (strain SC-B67), this protein is ATP-dependent lipid A-core flippase.